The primary structure comprises 67 residues: Photosystem II reaction center protein H (67 aa).

Residues 27-47 (GAVPVMAFVGVLLLVFLVILL) traverse the membrane as a helical segment.

This sequence belongs to the PsbH family. As to quaternary structure, PSII is composed of 1 copy each of membrane proteins PsbA, PsbB, PsbC, PsbD, PsbE, PsbF, PsbH, PsbI, PsbJ, PsbK, PsbL, PsbM, PsbT, PsbX, PsbY, Psb30/Ycf12, peripheral proteins PsbO, CyanoQ (PsbQ), PsbU, PsbV and a large number of cofactors. It forms dimeric complexes.

The protein resides in the cellular thylakoid membrane. One of the components of the core complex of photosystem II (PSII), required for its stability and/or assembly. PSII is a light-driven water:plastoquinone oxidoreductase that uses light energy to abstract electrons from H(2)O, generating O(2) and a proton gradient subsequently used for ATP formation. It consists of a core antenna complex that captures photons, and an electron transfer chain that converts photonic excitation into a charge separation. This is Photosystem II reaction center protein H from Prochlorococcus marinus (strain SARG / CCMP1375 / SS120).